A 425-amino-acid chain; its full sequence is Serine--tRNA ligase (425 aa).

Disordered regions lie at residues 43–68 and 108–131; these read QRSS…GSDP and LPNL…RHCW. A compositionally biased stretch (basic and acidic residues) spans 117 to 131; it reads PEGRDENDNQERHCW. 233 to 235 serves as a coordination point for L-serine; it reads TAE. 264-266 contacts ATP; sequence RRE. An L-serine-binding site is contributed by glutamate 287. Residue 351–354 participates in ATP binding; sequence EISS. Serine 385 is an L-serine binding site.

Belongs to the class-II aminoacyl-tRNA synthetase family. Type-1 seryl-tRNA synthetase subfamily. As to quaternary structure, homodimer. The tRNA molecule binds across the dimer.

It is found in the cytoplasm. The catalysed reaction is tRNA(Ser) + L-serine + ATP = L-seryl-tRNA(Ser) + AMP + diphosphate + H(+). It carries out the reaction tRNA(Sec) + L-serine + ATP = L-seryl-tRNA(Sec) + AMP + diphosphate + H(+). It functions in the pathway aminoacyl-tRNA biosynthesis; selenocysteinyl-tRNA(Sec) biosynthesis; L-seryl-tRNA(Sec) from L-serine and tRNA(Sec): step 1/1. Catalyzes the attachment of serine to tRNA(Ser). Is also able to aminoacylate tRNA(Sec) with serine, to form the misacylated tRNA L-seryl-tRNA(Sec), which will be further converted into selenocysteinyl-tRNA(Sec). The sequence is that of Serine--tRNA ligase from Prochlorococcus marinus (strain MIT 9303).